We begin with the raw amino-acid sequence, 359 residues long: Apelin receptor B (359 aa).

The Extracellular segment spans residues M1–L36. N-linked (GlcNAc...) asparagine glycans are attached at residues N6 and N21. Disulfide bonds link C25/C288 and C107/C186. A helical transmembrane segment spans residues I37–F57. Residues T58–N75 are Cytoplasmic-facing. The chain crosses the membrane as a helical span at residues L76 to L96. Over G97–K108 the chain is Extracellular. Residues I109 to S129 form a helical membrane-spanning segment. The Cytoplasmic segment spans residues L130–M151. A helical membrane pass occupies residues R152 to F172. Topologically, residues R173–A213 are extracellular. N182 is a glycosylation site (N-linked (GlcNAc...) asparagine). Residues L214–V234 form a helical membrane-spanning segment. At T235–L251 the chain is on the cytoplasmic side. The helical transmembrane segment at L252–V272 threads the bilayer. Residues K273–D286 lie on the Extracellular side of the membrane. The helical transmembrane segment at S287–V307 threads the bilayer. Residues N308–V359 lie on the Cytoplasmic side of the membrane.

It belongs to the G-protein coupled receptor 1 family. Mesendodermal expression at the blastoderm margin appears by 4.5 hpf. At early gastrulation, expression is maintained ventrolaterally while expression in dorsal cells and random deep cells declines. During gastrulation and segmentation, expression is maintained in adaxial, intermediate, and lateral plate mesoderm. During late segmentation, expressed in several regions including the forming heart. By 24 hpf, expressed in the dorsal aorta, caudal vein, and intersomitic blood vessels.

The protein localises to the cell membrane. Its function is as follows. G protein-coupled receptor for peptide hormones apelin (apln) and apelin receptor early endogenous ligand (apela), that plays a role in the regulation of normal cardiovascular function and fluid homeostasis. When acting as apelin receptor, activates both G(i) protein pathway that inhibits adenylate cyclase activity, and the beta-arrestin pathway that promotes internalization of the receptor. Also functions as mechanoreceptor that is activated by pathological stimuli in a G-protein-independent fashion to induce beta-arrestin signaling, hence eliciting cardiac hypertrophy. However, the presence of apelin ligand blunts cardiac hypertrophic induction from APLNR/APJ on response to pathological stimuli. Plays a key role in early development such as gastrulation, blood vessels formation and heart morphogenesis by acting as a receptor for apela hormone, promoting endoderm and mesendoderm cell migration and regulating the migration of cells fated to become myocardial progenitors, respectively. Positively regulates angioblast migration toward the embryonic midline, i.e. the position of the future vessel formation, during vasculogenesis. May promote sinus venosus (SV)-derived endothelial cells migration into the developing heart to promote coronary blood vessel development. Required for cardiovascular development, particularly for intersomitic vein angiogenesis by acting as a receptor for apln hormone. Plays a role in various processes in adults such as regulation of blood vessel formation, blood pressure, heart contractility and heart failure. Acts redundantly with agtrl1a in heart development. G protein-coupled receptor for peptide hormones apelin (APLN) and apelin receptor early endogenous ligand (APELA/ELA), that plays a role in the regulation of normal cardiovascular function and fluid homeostasis. When acting as apelin receptor, activates both G(i) protein pathway that inhibits adenylate cyclase activity, and the beta-arrestin pathway that promotes internalization of the receptor. APLNR/APJ also functions as mechanoreceptor that is activated by pathological stimuli in a G-protein-independent fashion to induce beta-arrestin signaling, hence eliciting cardiac hypertrophy. Plays a key role in early development such as gastrulation, blood vessels formation and heart morphogenesis by acting as a APELA receptor. May promote angioblast migration toward the embryonic midline, i.e. the position of the future vessel formation, during vasculogenesis. Promotes sinus venosus (SV)-derived endothelial cells migration into the developing heart to promote coronary blood vessel development. Also plays a role in various processes in adults such as regulation of blood vessel formation, blood pressure, heart contractility and heart failure. In Danio rerio (Zebrafish), this protein is Apelin receptor B (aplnrb).